A 254-amino-acid chain; its full sequence is MSEQQMTNEAAKTLDGWYALHDFRTMDWASWKLLSSDERQSIIHEFTGLLEKWGVAQKEGKGSQTLYSIVGQKADFMLMILRPTMEELNQIELEFNKSRLAEFTIPAYSYVSVVELSNYLASGDGDPYENPHVRARLYPELPESKYVCFYPMDKRRSGNDNWYMLSMEERRNLMRSHGLIGRSYAGKVKQIITGSVGFDDYEWGVTLFSDDVLQFKKLVYEMRFDEVSARYGEFGSFFVGNHLSLDTLPQFLYV.

Residues arginine 136, 150–154 (YPMDK), histidine 177, glutamine 190, and serine 228 contribute to the Fe-coproporphyrin III site. Tyrosine 150 is an active-site residue.

The protein belongs to the ChdC family. Type 1 subfamily. The cofactor is Fe-coproporphyrin III.

The catalysed reaction is Fe-coproporphyrin III + 2 H2O2 + 2 H(+) = heme b + 2 CO2 + 4 H2O. It carries out the reaction Fe-coproporphyrin III + H2O2 + H(+) = harderoheme III + CO2 + 2 H2O. The enzyme catalyses harderoheme III + H2O2 + H(+) = heme b + CO2 + 2 H2O. The protein operates within porphyrin-containing compound metabolism; protoheme biosynthesis. Involved in coproporphyrin-dependent heme b biosynthesis. Catalyzes the decarboxylation of Fe-coproporphyrin III (coproheme) to heme b (protoheme IX), the last step of the pathway. The reaction occurs in a stepwise manner with a three-propionate harderoheme intermediate. The sequence is that of Coproheme decarboxylase from Bacillus subtilis (strain 168).